We begin with the raw amino-acid sequence, 392 residues long: Putative transactivator/viroplasmin protein (392 aa).

Positions 1–88 (MEDMMKQILE…NVEEQYQWKN (88 aa)) form a coiled coil. The segment at 358–392 (EIEKEEPGEEKNLEDVSTDDNNEKKKIRSVIVKET) is disordered.

It belongs to the caulimoviridae viroplasmin family.

Its subcellular location is the host cytoplasm. Its function is as follows. Enhances the translation of downstream ORFs on polycistronic mRNAs derived from cassava vein mosaic virus. This is Putative transactivator/viroplasmin protein from Cassava vein mosaic virus (CsVMV).